We begin with the raw amino-acid sequence, 745 residues long: 1,4-alpha-glucan branching enzyme GlgB (745 aa).

Residue D416 is the Nucleophile of the active site. E469 functions as the Proton donor in the catalytic mechanism.

This sequence belongs to the glycosyl hydrolase 13 family. GlgB subfamily. In terms of assembly, monomer.

The catalysed reaction is Transfers a segment of a (1-&gt;4)-alpha-D-glucan chain to a primary hydroxy group in a similar glucan chain.. The protein operates within glycan biosynthesis; glycogen biosynthesis. Functionally, catalyzes the formation of the alpha-1,6-glucosidic linkages in glycogen by scission of a 1,4-alpha-linked oligosaccharide from growing alpha-1,4-glucan chains and the subsequent attachment of the oligosaccharide to the alpha-1,6 position. This chain is 1,4-alpha-glucan branching enzyme GlgB, found in Shewanella sp. (strain MR-4).